Here is a 565-residue protein sequence, read N- to C-terminus: uncharacterized protein (565 aa).

A run of 5 helical transmembrane segments spans residues 14 to 34 (LAIF…IGKF), 36 to 56 (LGVV…DITV), 92 to 112 (MGFA…LAKI), 117 to 137 (VGEA…IGVA), and 157 to 177 (IIPV…AWVL). In terms of domain architecture, RCK C-terminal spans 296 to 381 (PEVLDPQLLD…VDAAAKQLGY (86 aa)). Helical transmembrane passes span 391–411 (MIFV…SIHM), 414–434 (VPIS…FGWL), 448–468 (ALWI…GIAA), 481–501 (LSLF…GILM), 508–530 (FHPA…LGAI), and 545–565 (VTYA…VLLM).

It belongs to the AAE transporter (TC 2.A.81) family.

It localises to the cell membrane. This is an uncharacterized protein from Bacteroides fragilis (strain YCH46).